The sequence spans 160 residues: Transcriptional repressor NrdR (160 aa).

Residues Cys3–Cys34 fold into a zinc finger. Positions Leu49 to Asp139 constitute an ATP-cone domain.

This sequence belongs to the NrdR family. The cofactor is Zn(2+).

Functionally, negatively regulates transcription of bacterial ribonucleotide reductase nrd genes and operons by binding to NrdR-boxes. In Bartonella bacilliformis (strain ATCC 35685 / KC583 / Herrer 020/F12,63), this protein is Transcriptional repressor NrdR.